The primary structure comprises 473 residues: Methionine aminopeptidase 2 (473 aa).

The interval 23 to 121 is disordered; it reads LAEDSSNGTQ…KLVSIDQSYP (99 aa). Residues 41 to 53 are compositionally biased toward polar residues; it reads KATTAVGQDNGNN. Residues 73–83 show a composition bias toward acidic residues; it reads DDDDDDEDDDV. Low complexity predominate over residues 84–93; it reads AAAAAAVGDA. Over residues 97–113 the composition is skewed to basic residues; the sequence is KKKKKKKSSNKKKKKKL. Histidine 224 provides a ligand contact to substrate. 3 residues coordinate a divalent metal cation: aspartate 244, aspartate 255, and histidine 326. Histidine 334 is a binding site for substrate. A divalent metal cation-binding residues include glutamate 359 and glutamate 454.

Belongs to the peptidase M24A family. Methionine aminopeptidase eukaryotic type 2 subfamily. Co(2+) is required as a cofactor. Requires Zn(2+) as cofactor. Mn(2+) serves as cofactor. The cofactor is Fe(2+).

It localises to the cytoplasm. It carries out the reaction Release of N-terminal amino acids, preferentially methionine, from peptides and arylamides.. In terms of biological role, cotranslationally removes the N-terminal methionine from nascent proteins. The N-terminal methionine is often cleaved when the second residue in the primary sequence is small and uncharged (Met-Ala-, Cys, Gly, Pro, Ser, Thr, or Val). The protein is Methionine aminopeptidase 2 of Lodderomyces elongisporus (strain ATCC 11503 / CBS 2605 / JCM 1781 / NBRC 1676 / NRRL YB-4239) (Yeast).